The sequence spans 179 residues: Large ribosomal subunit protein uL5 (179 aa).

This sequence belongs to the universal ribosomal protein uL5 family. As to quaternary structure, part of the 50S ribosomal subunit; part of the 5S rRNA/L5/L18/L25 subcomplex. Contacts the 5S rRNA and the P site tRNA. Forms a bridge to the 30S subunit in the 70S ribosome.

Its function is as follows. This is one of the proteins that bind and probably mediate the attachment of the 5S RNA into the large ribosomal subunit, where it forms part of the central protuberance. In the 70S ribosome it contacts protein S13 of the 30S subunit (bridge B1b), connecting the 2 subunits; this bridge is implicated in subunit movement. Contacts the P site tRNA; the 5S rRNA and some of its associated proteins might help stabilize positioning of ribosome-bound tRNAs. This Geobacillus thermodenitrificans (strain NG80-2) protein is Large ribosomal subunit protein uL5.